We begin with the raw amino-acid sequence, 777 residues long: E3 UFM1-protein ligase 1 homolog (777 aa).

A compositionally biased stretch (basic and acidic residues) spans 396–417; that stretch reads MKHQDPMDRDSAVGEGKADKRE. The disordered stretch occupies residues 396 to 470; that stretch reads MKHQDPMDRD…PSGGKKGGKD (75 aa).

This sequence belongs to the UFL1 family.

E3 UFM1-protein ligase that mediates ufmylation of target proteins. This chain is E3 UFM1-protein ligase 1 homolog, found in Aedes aegypti (Yellowfever mosquito).